Reading from the N-terminus, the 271-residue chain is Thiazole synthase (271 aa).

Lys95 functions as the Schiff-base intermediate with DXP in the catalytic mechanism. 1-deoxy-D-xylulose 5-phosphate-binding positions include Gly156, 182-183, and 204-205; these read AG and NT.

It belongs to the ThiG family. As to quaternary structure, homotetramer. Forms heterodimers with either ThiH or ThiS.

It is found in the cytoplasm. It carries out the reaction [ThiS sulfur-carrier protein]-C-terminal-Gly-aminoethanethioate + 2-iminoacetate + 1-deoxy-D-xylulose 5-phosphate = [ThiS sulfur-carrier protein]-C-terminal Gly-Gly + 2-[(2R,5Z)-2-carboxy-4-methylthiazol-5(2H)-ylidene]ethyl phosphate + 2 H2O + H(+). The protein operates within cofactor biosynthesis; thiamine diphosphate biosynthesis. Functionally, catalyzes the rearrangement of 1-deoxy-D-xylulose 5-phosphate (DXP) to produce the thiazole phosphate moiety of thiamine. Sulfur is provided by the thiocarboxylate moiety of the carrier protein ThiS. In vitro, sulfur can be provided by H(2)S. The chain is Thiazole synthase from Shewanella amazonensis (strain ATCC BAA-1098 / SB2B).